The primary structure comprises 372 residues: Peptide chain release factor 2 (372 aa).

Gln253 is subject to N5-methylglutamine.

This sequence belongs to the prokaryotic/mitochondrial release factor family. Post-translationally, methylated by PrmC. Methylation increases the termination efficiency of RF2.

Its subcellular location is the cytoplasm. In terms of biological role, peptide chain release factor 2 directs the termination of translation in response to the peptide chain termination codons UGA and UAA. This Nocardia farcinica (strain IFM 10152) protein is Peptide chain release factor 2.